The following is an 866-amino-acid chain: Probable LRR receptor-like serine/threonine-protein kinase At5g16900 (866 aa).

Positions 1–20 (MEDRHRYLFFIFAIIHYVQA) are cleaved as a signal peptide. Residues 21 to 515 (QQGFISLDCG…SSSGNKETTV (495 aa)) are Extracellular-facing. N-linked (GlcNAc...) asparagine glycosylation is found at Asn137, Asn176, Asn230, Asn251, Asn331, Asn404, Asn409, and Asn436. LRR repeat units lie at residues 415–438 (RIIS…QNLT), 439–461 (QLQK…LANM), and 463–485 (SLLF…LLDR). N-linked (GlcNAc...) asparagine glycans are attached at residues Asn468 and Asn505. A helical membrane pass occupies residues 516–536 (IAPVAAAIAIFIAVLVLIIVF). The Cytoplasmic segment spans residues 537 to 866 (IKKRPSSIRA…LNQVIDSKSS (330 aa)). Thr564 bears the Phosphothreonine mark. One can recognise a Protein kinase domain in the interval 573–846 (NNFERVIGEG…HVVQELKQCI (274 aa)). ATP-binding positions include 579–587 (IGEGGFGVV) and Lys601. Tyr646 carries the phosphotyrosine modification. Catalysis depends on Asp698, which acts as the Proton acceptor. Ser732 carries the phosphoserine modification. A phosphothreonine mark is found at Thr733 and Thr738. Phosphotyrosine is present on Tyr746.

It belongs to the protein kinase superfamily. Ser/Thr protein kinase family.

Its subcellular location is the membrane. The enzyme catalyses L-seryl-[protein] + ATP = O-phospho-L-seryl-[protein] + ADP + H(+). The catalysed reaction is L-threonyl-[protein] + ATP = O-phospho-L-threonyl-[protein] + ADP + H(+). This Arabidopsis thaliana (Mouse-ear cress) protein is Probable LRR receptor-like serine/threonine-protein kinase At5g16900.